The chain runs to 293 residues: Exosome complex component RRP4 (293 aa).

The region spanning 79 to 159 (EVGDIVVGRI…SDGAVSLHTR (81 aa)) is the S1 motif domain. S124 is subject to Phosphoserine.

The protein belongs to the RRP4 family. Component of the RNA exosome core complex (Exo-9), composed of EXOSC1, EXOSC2, EXOSC3, EXOSC4, EXOSC5, EXOSC6, EXOSC7, EXOSC8 and EXOSC9; within the complex interacts with EXOSC4 and EXOSC7. The catalytically inactive RNA exosome core complex (Exo-9) associates with the catalytic subunit EXOSC10/RRP6. Exo-9 may associate with DIS3 to form the nucleolar exosome complex, or DIS3L to form the cytoplasmic exosome complex. Exo-9 is formed by a hexameric base ring consisting of the heterodimers EXOSC4-EXOSC9, EXOSC5-EXOSC8 and EXOSC6-EXOSC7, and a cap ring consisting of EXOSC1, EXOSC2 and EXOSC3. The RNA exosome complex associates with cofactors C1D/RRP47, MPHOSPH6/MPP6 and MTREX/MTR4. Interacts with GTPBP1. Interacts with ZFP36L1 (via N-terminus).

It is found in the cytoplasm. The protein resides in the nucleus. The protein localises to the nucleolus. Functionally, non-catalytic component of the RNA exosome complex which has 3'-&gt;5' exoribonuclease activity and participates in a multitude of cellular RNA processing and degradation events. In the nucleus, the RNA exosome complex is involved in proper maturation of stable RNA species such as rRNA, snRNA and snoRNA, in the elimination of RNA processing by-products and non-coding 'pervasive' transcripts, such as antisense RNA species and promoter-upstream transcripts (PROMPTs), and of mRNAs with processing defects, thereby limiting or excluding their export to the cytoplasm. The RNA exosome may be involved in Ig class switch recombination (CSR) and/or Ig variable region somatic hypermutation (SHM) by targeting AICDA deamination activity to transcribed dsDNA substrates. In the cytoplasm, the RNA exosome complex is involved in general mRNA turnover and specifically degrades inherently unstable mRNAs containing AU-rich elements (AREs) within their 3' untranslated regions, and in RNA surveillance pathways, preventing translation of aberrant mRNAs. It seems to be involved in degradation of histone mRNA. The catalytic inactive RNA exosome core complex of 9 subunits (Exo-9) is proposed to play a pivotal role in the binding and presentation of RNA for ribonucleolysis, and to serve as a scaffold for the association with catalytic subunits and accessory proteins or complexes. EXOSC2 as peripheral part of the Exo-9 complex stabilizes the hexameric ring of RNase PH-domain subunits through contacts with EXOSC4 and EXOSC7. The chain is Exosome complex component RRP4 from Homo sapiens (Human).